The chain runs to 359 residues: Pyruvate dehydrogenase E1 component subunit beta, mitochondrial (359 aa).

The transit peptide at 1–30 directs the protein to the mitochondrion; it reads MAVVAGLVRGPLRQASGLLKRRFHRSAPAA. At Y67 the chain carries Phosphotyrosine. E89 is a binding site for thiamine diphosphate. Residues I142, A190, I191, D193, and N195 each contribute to the K(+) site. An N6-acetyllysine modification is found at K354.

As to quaternary structure, heterotetramer of two PDHA1 and two PDHB subunits. The heterotetramer interacts with DLAT, and is part of the multimeric pyruvate dehydrogenase complex that contains multiple copies of pyruvate dehydrogenase (E1), dihydrolipoamide acetyltransferase (DLAT, E2) and lipoamide dehydrogenase (DLD, E3). These subunits are bound to an inner core composed of about 48 DLAT and 12 PDHX molecules. Interacts with DLAT. It depends on thiamine diphosphate as a cofactor.

It is found in the mitochondrion matrix. It catalyses the reaction N(6)-[(R)-lipoyl]-L-lysyl-[protein] + pyruvate + H(+) = N(6)-[(R)-S(8)-acetyldihydrolipoyl]-L-lysyl-[protein] + CO2. The pyruvate dehydrogenase complex catalyzes the overall conversion of pyruvate to acetyl-CoA and CO(2), and thereby links the glycolytic pathway to the tricarboxylic cycle. This Mus musculus (Mouse) protein is Pyruvate dehydrogenase E1 component subunit beta, mitochondrial (Pdhb).